A 224-amino-acid polypeptide reads, in one-letter code: PKHD-type hydroxylase HNE_1625 (224 aa).

The 99-residue stretch at 77 to 175 (KFAPPLISCS…RFVFVGWIQS (99 aa)) folds into the Fe2OG dioxygenase domain. Fe cation-binding residues include H95, D97, and H156. R166 provides a ligand contact to 2-oxoglutarate.

The cofactor is Fe(2+). L-ascorbate is required as a cofactor.

The protein is PKHD-type hydroxylase HNE_1625 of Hyphomonas neptunium (strain ATCC 15444).